The chain runs to 234 residues: HTH-type transcriptional regulator ArcR (234 aa).

An a nucleoside 3',5'-cyclic phosphate-binding site is contributed by 40–129; sequence VRHYTKGQVI…MAFLCKANDD (90 aa). Residues 155–228 form the HTH crp-type domain; it reads KFAKDRIIKL…HKNWLVSKHL (74 aa). Residues 188–207 constitute a DNA-binding region (H-T-H motif); the sequence is IQLMSDMAGISRETAGHIIH.

The protein resides in the cytoplasm. Its function is as follows. Positively regulates the expression of the arcABDCR operon under anaerobic conditions, thus playing an essential role in arginine catabolism. May also control the expression of genes encoding proteins which are involved in anaerobic metabolism. Can bind cyclic AMP. The chain is HTH-type transcriptional regulator ArcR (arcR) from Staphylococcus aureus (strain USA300 / TCH1516).